A 439-amino-acid chain; its full sequence is Na(+)/H(+) antiporter NhaA 1 (439 aa).

Helical transmembrane passes span Ile-14–Ala-34, Ile-60–Leu-80, Ala-98–Phe-118, Gly-127–Gly-147, Ile-156–Phe-176, Glu-179–Ala-199, Ile-213–Gly-233, His-303–Val-323, Ile-335–Ala-355, Ile-375–Leu-395, and Val-408–Ala-428.

The protein belongs to the NhaA Na(+)/H(+) (TC 2.A.33) antiporter family.

It is found in the cell inner membrane. It carries out the reaction Na(+)(in) + 2 H(+)(out) = Na(+)(out) + 2 H(+)(in). Its function is as follows. Na(+)/H(+) antiporter that extrudes sodium in exchange for external protons. The chain is Na(+)/H(+) antiporter NhaA 1 from Psychromonas ingrahamii (strain DSM 17664 / CCUG 51855 / 37).